We begin with the raw amino-acid sequence, 180 residues long: ATP-dependent protease subunit HslV (180 aa).

The active site involves T7. Na(+) contacts are provided by G165, C168, and T171.

Belongs to the peptidase T1B family. HslV subfamily. As to quaternary structure, a double ring-shaped homohexamer of HslV is capped on each side by a ring-shaped HslU homohexamer. The assembly of the HslU/HslV complex is dependent on binding of ATP.

It is found in the cytoplasm. The enzyme catalyses ATP-dependent cleavage of peptide bonds with broad specificity.. Allosterically activated by HslU binding. Functionally, protease subunit of a proteasome-like degradation complex believed to be a general protein degrading machinery. The chain is ATP-dependent protease subunit HslV from Bacillus cereus (strain G9842).